Here is a 257-residue protein sequence, read N- to C-terminus: Glutamate racemase (257 aa).

Residues 12–13 and 44–45 each bind substrate; these read DS and YG. The active-site Proton donor/acceptor is C75. 76 to 77 provides a ligand contact to substrate; that stretch reads NT. The active-site Proton donor/acceptor is the C176. A substrate-binding site is contributed by 177-178; it reads TH.

It belongs to the aspartate/glutamate racemases family.

The enzyme catalyses L-glutamate = D-glutamate. It functions in the pathway cell wall biogenesis; peptidoglycan biosynthesis. In terms of biological role, provides the (R)-glutamate required for cell wall biosynthesis. The polypeptide is Glutamate racemase (Thermus thermophilus (strain ATCC BAA-163 / DSM 7039 / HB27)).